The following is a 371-amino-acid chain: MKMTFRWFGKDYDTVSLDHIRQIPGVEGIVGALYHIPVGEVWPLEDILELKRQVNKNGFHLEVIESVNVHEDIKLGLPSRERYIENYKQTIRNLSKAGVKVICYNFMPIFDWTRSDLAKRRPDGSTVLAYEKQKVEQIDPEEMIRRIENGANGFLLPGWEPERLKTIKPLFALYKGVTEDDLLDHLRYFLEQIVPVAEECGIQMAIHPDDPPWSVFGLPRIVTNKENLKKIINMVNSPANGLTLCSGSLGANPDNDIPDIFRYFLRMGRVPFVHVRNIEIHTNGDFEETSHRSCDGSLNICEIVKVLHESDFQGYIRPDHGRMIWGEQARPGYGLYDRALGIMYLLGIWDSLENEKRKREGDKTCSQSIQV.

This sequence belongs to the mannonate dehydratase family. It depends on Fe(2+) as a cofactor. Mn(2+) is required as a cofactor.

It carries out the reaction D-mannonate = 2-dehydro-3-deoxy-D-gluconate + H2O. Its pathway is carbohydrate metabolism; pentose and glucuronate interconversion. Its function is as follows. Catalyzes the dehydration of D-mannonate. The polypeptide is Mannonate dehydratase (Geobacillus thermodenitrificans (strain NG80-2)).